The chain runs to 278 residues: Sulfur carrier protein FdhD (278 aa).

The active-site Cysteine persulfide intermediate is cysteine 121. 260-265 (FCKPGR) provides a ligand contact to Mo-bis(molybdopterin guanine dinucleotide).

Belongs to the FdhD family.

Its subcellular location is the cytoplasm. Required for formate dehydrogenase (FDH) activity. Acts as a sulfur carrier protein that transfers sulfur from IscS to the molybdenum cofactor prior to its insertion into FDH. This is Sulfur carrier protein FdhD from Salmonella typhi.